A 464-amino-acid chain; its full sequence is UDP-N-acetylmuramate--L-alanine ligase (464 aa).

Residue G112–T118 participates in ATP binding.

This sequence belongs to the MurCDEF family.

The protein localises to the cytoplasm. The catalysed reaction is UDP-N-acetyl-alpha-D-muramate + L-alanine + ATP = UDP-N-acetyl-alpha-D-muramoyl-L-alanine + ADP + phosphate + H(+). Its pathway is cell wall biogenesis; peptidoglycan biosynthesis. Functionally, cell wall formation. The sequence is that of UDP-N-acetylmuramate--L-alanine ligase from Acidithiobacillus ferrooxidans (strain ATCC 23270 / DSM 14882 / CIP 104768 / NCIMB 8455) (Ferrobacillus ferrooxidans (strain ATCC 23270)).